A 334-amino-acid polypeptide reads, in one-letter code: Phenylalanine--tRNA ligase alpha subunit (334 aa).

Mg(2+) is bound at residue glutamate 249.

It belongs to the class-II aminoacyl-tRNA synthetase family. Phe-tRNA synthetase alpha subunit type 1 subfamily. In terms of assembly, tetramer of two alpha and two beta subunits. Mg(2+) is required as a cofactor.

The protein resides in the cytoplasm. It catalyses the reaction tRNA(Phe) + L-phenylalanine + ATP = L-phenylalanyl-tRNA(Phe) + AMP + diphosphate + H(+). In Desulfatibacillum aliphaticivorans, this protein is Phenylalanine--tRNA ligase alpha subunit.